Consider the following 148-residue polypeptide: Deoxyuridine 5'-triphosphate nucleotidohydrolase (148 aa).

Residues 68-70 (RSG), Asn81, 85-87 (TID), and Lys95 contribute to the substrate site.

This sequence belongs to the dUTPase family. The cofactor is Mg(2+).

It carries out the reaction dUTP + H2O = dUMP + diphosphate + H(+). The protein operates within pyrimidine metabolism; dUMP biosynthesis; dUMP from dCTP (dUTP route): step 2/2. Its function is as follows. This enzyme is involved in nucleotide metabolism: it produces dUMP, the immediate precursor of thymidine nucleotides and it decreases the intracellular concentration of dUTP so that uracil cannot be incorporated into DNA. The protein is Deoxyuridine 5'-triphosphate nucleotidohydrolase of Rickettsia prowazekii (strain Madrid E).